The sequence spans 325 residues: Adenine deaminase (325 aa).

Positions 11, 13, and 189 each coordinate Zn(2+). The active-site Proton donor is glutamate 192. Aspartate 270 contributes to the Zn(2+) binding site. Aspartate 271 is a binding site for substrate.

Belongs to the metallo-dependent hydrolases superfamily. Adenosine and AMP deaminases family. Adenine deaminase type 2 subfamily. The cofactor is Zn(2+).

The enzyme catalyses adenine + H2O + H(+) = hypoxanthine + NH4(+). Functionally, catalyzes the hydrolytic deamination of adenine to hypoxanthine. Plays an important role in the purine salvage pathway and in nitrogen catabolism. This chain is Adenine deaminase, found in Agrobacterium fabrum (strain C58 / ATCC 33970) (Agrobacterium tumefaciens (strain C58)).